Consider the following 557-residue polypeptide: Glutamine--tRNA ligase (557 aa).

The short motif at 42–52 is the 'HIGH' region element; the sequence is PEPNGYLHIGH. Residues 43–45 and 49–55 each bind ATP; these read EPN and HIGHAKS. Residues aspartate 75 and tyrosine 220 each coordinate L-glutamine. Residues threonine 239 and 270-271 each bind ATP; that span reads RL. Positions 277-281 match the 'KMSKS' region motif; the sequence is LTSKR.

The protein belongs to the class-I aminoacyl-tRNA synthetase family. Monomer.

The protein localises to the cytoplasm. It carries out the reaction tRNA(Gln) + L-glutamine + ATP = L-glutaminyl-tRNA(Gln) + AMP + diphosphate. The chain is Glutamine--tRNA ligase from Haemophilus influenzae (strain ATCC 51907 / DSM 11121 / KW20 / Rd).